The following is a 352-amino-acid chain: Photosystem II D2 protein (352 aa).

Residues 40-60 (TAYLALGGWLTGTTFVTSWYT) form a helical membrane-spanning segment. His117 provides a ligand contact to chlorophyll a. A helical transmembrane segment spans residues 124 to 140 (GFMLRQFEIARLVGIRP). Positions 129 and 142 each coordinate pheophytin a. Residues 152–165 (VFVSVFLIYPLGQS) form a helical membrane-spanning segment. A chlorophyll a-binding site is contributed by His197. Residues 207–227 (GALLCAIHGATVENTLFEDGE) traverse the membrane as a helical segment. Residues His214 and Phe261 each contribute to the a plastoquinone site. His214 serves as a coordination point for Fe cation. A Fe cation-binding site is contributed by His268. Residues 278-294 (GLWTSSIGIIGLALNLR) traverse the membrane as a helical segment.

Belongs to the reaction center PufL/M/PsbA/D family. As to quaternary structure, PSII is composed of 1 copy each of membrane proteins PsbA, PsbB, PsbC, PsbD, PsbE, PsbF, PsbH, PsbI, PsbJ, PsbK, PsbL, PsbM, PsbT, PsbX, PsbY, PsbZ, Psb30/Ycf12, at least 3 peripheral proteins of the oxygen-evolving complex and a large number of cofactors. It forms dimeric complexes. It depends on The D1/D2 heterodimer binds P680, chlorophylls that are the primary electron donor of PSII, and subsequent electron acceptors. It shares a non-heme iron and each subunit binds pheophytin, quinone, additional chlorophylls, carotenoids and lipids. There is also a Cl(-1) ion associated with D1 and D2, which is required for oxygen evolution. The PSII complex binds additional chlorophylls, carotenoids and specific lipids. as a cofactor.

Its subcellular location is the plastid. The protein localises to the organellar chromatophore thylakoid membrane. The enzyme catalyses 2 a plastoquinone + 4 hnu + 2 H2O = 2 a plastoquinol + O2. Functionally, photosystem II (PSII) is a light-driven water:plastoquinone oxidoreductase that uses light energy to abstract electrons from H(2)O, generating O(2) and a proton gradient subsequently used for ATP formation. It consists of a core antenna complex that captures photons, and an electron transfer chain that converts photonic excitation into a charge separation. The D1/D2 (PsbA/PsbD) reaction center heterodimer binds P680, the primary electron donor of PSII as well as several subsequent electron acceptors. D2 is needed for assembly of a stable PSII complex. The sequence is that of Photosystem II D2 protein from Paulinella chromatophora.